The sequence spans 490 residues: Probable cytosol aminopeptidase (490 aa).

2 residues coordinate Mn(2+): K262 and D267. K274 is a catalytic residue. 3 residues coordinate Mn(2+): D285, D344, and E346. R348 is a catalytic residue.

This sequence belongs to the peptidase M17 family. Mn(2+) serves as cofactor.

Its subcellular location is the cytoplasm. It carries out the reaction Release of an N-terminal amino acid, Xaa-|-Yaa-, in which Xaa is preferably Leu, but may be other amino acids including Pro although not Arg or Lys, and Yaa may be Pro. Amino acid amides and methyl esters are also readily hydrolyzed, but rates on arylamides are exceedingly low.. It catalyses the reaction Release of an N-terminal amino acid, preferentially leucine, but not glutamic or aspartic acids.. Presumably involved in the processing and regular turnover of intracellular proteins. Catalyzes the removal of unsubstituted N-terminal amino acids from various peptides. The protein is Probable cytosol aminopeptidase of Mannheimia succiniciproducens (strain KCTC 0769BP / MBEL55E).